A 582-amino-acid polypeptide reads, in one-letter code: GPI-anchor transamidase component PIGT (582 aa).

An N-terminal signal peptide occupies residues 1–25; sequence MAAAMPLGLPLRLLVLLLVGRGCCG. Over 26 to 529 the chain is Lumenal; that stretch reads CAEGPRDSLR…NLPTPDFSMP (504 aa). N-linked (GlcNAc...) asparagine glycosylation occurs at Asn168. 2 disulfide bridges follow: Cys199/Cys276 and Cys230/Cys235. Asn295 and Asn331 each carry an N-linked (GlcNAc...) asparagine glycan. Positions 465, 525, 527, and 531 each coordinate a 2-acyl-6-[6-phosphoethanolamine-alpha-D-mannosyl-(1-&gt;2)-6-phosphoethanolamine-alpha-D-mannosyl-(1-&gt;6)-2-phosphoethanolamine-alpha-D-mannosyl-(1-&gt;4)-alpha-D-glucosaminyl]-1-(1-radyl,2-acyl-sn-glycero-3-phospho)-1D-myo-inositol. Residues 530–552 form a helical membrane-spanning segment; that stretch reads YNVICLTCTVVAVCYGSFYNLLT. The Cytoplasmic segment spans residues 553-582; it reads RTFHIEEPKSGGLAKRLANLIRRARGVPPL.

The protein belongs to the PIGT family. In terms of assembly, heteropentamer. Part of the GPI-anchor transamidase complex, consisting of PIGK, PIGT, PIGS, PIGU and GAA1. The disulfide bond between PIGK/GPI8 and PIGT is important for normal enzyme activity.

It localises to the endoplasmic reticulum membrane. It participates in glycolipid biosynthesis; glycosylphosphatidylinositol-anchor biosynthesis. Component of the glycosylphosphatidylinositol-anchor (GPI-anchor) transamidase (GPI-T) complex that catalyzes the formation of the linkage between a proprotein and a GPI-anchor and participates in GPI anchored protein biosynthesis. May play a crucial role in GPI-T complex assembly in the luminal layer. Binds GPI-anchor. This Mus musculus (Mouse) protein is GPI-anchor transamidase component PIGT.